The sequence spans 212 residues: Putative protein phosphatase 2C 53 (212 aa).

In terms of domain architecture, PPM-type phosphatase spans 1-208 (MEDRFSAITN…DDISVMLIPL (208 aa)). Mn(2+) is bound at residue aspartate 199.

It belongs to the PP2C family. It depends on Mg(2+) as a cofactor. Mn(2+) serves as cofactor.

It catalyses the reaction O-phospho-L-seryl-[protein] + H2O = L-seryl-[protein] + phosphate. The enzyme catalyses O-phospho-L-threonyl-[protein] + H2O = L-threonyl-[protein] + phosphate. This chain is Putative protein phosphatase 2C 53, found in Arabidopsis thaliana (Mouse-ear cress).